A 544-amino-acid chain; its full sequence is Chaperonin GroEL (544 aa).

Residues 30-33 (TLGP), lysine 51, 87-91 (DGTTT), glycine 415, 479-481 (NAA), and aspartate 495 contribute to the ATP site. Over residues 525–537 (PQDTPATAAAPDM) the composition is skewed to low complexity. Residues 525-544 (PQDTPATAAAPDMGGMGGMM) form a disordered region.

This sequence belongs to the chaperonin (HSP60) family. As to quaternary structure, forms a cylinder of 14 subunits composed of two heptameric rings stacked back-to-back. Interacts with the co-chaperonin GroES.

The protein resides in the cytoplasm. It catalyses the reaction ATP + H2O + a folded polypeptide = ADP + phosphate + an unfolded polypeptide.. Its function is as follows. Together with its co-chaperonin GroES, plays an essential role in assisting protein folding. The GroEL-GroES system forms a nano-cage that allows encapsulation of the non-native substrate proteins and provides a physical environment optimized to promote and accelerate protein folding. The chain is Chaperonin GroEL from Ruthia magnifica subsp. Calyptogena magnifica.